A 354-amino-acid polypeptide reads, in one-letter code: Erythroferrone (354 aa).

An N-terminal signal peptide occupies residues 1–28; sequence MAPARRPAGARLLLVYAGLLAAAAAGLG. Composition is skewed to low complexity over residues 26 to 37 and 51 to 62; these read GLGSPEPGAPSR and PRGPGESRAGPA. Residues 26–123 are disordered; that stretch reads GLGSPEPGAP…PGPPGPQGPP (98 aa). Residues 69–80 are compositionally biased toward basic and acidic residues; the sequence is TAERAHSVDPRD. Over residues 94-107 the composition is skewed to basic residues; the sequence is NGKKRSRGKAKKLK. Hydroxyproline is present on residues proline 111, proline 113, proline 114, proline 116, proline 117, and proline 119. Over residues 111 to 123 the composition is skewed to pro residues; sequence PGPPGPPGPQGPP. One can recognise a C1q domain in the interval 199–354; that stretch reads APRVEAAFLC…SHFSAVLLGV (156 aa). 3 N-linked (GlcNAc...) asparagine glycosylation sites follow: asparagine 243, asparagine 295, and asparagine 333.

It belongs to the adipolin/erythroferrone family. Homodimer; disulfide-linked. Forms trimer, hexamers and higher molecular weight oligomers. May form heteromeric complexes with C1QTNF2 and C1QTNF12 and, to a lesser extent, with C1QTNF5 and C1QTNF10. Interacts with BMP5 and BMP7; the interaction inhibits BMP-induced transcription of HAMP. Interacts with BMP6; the interaction inhibits BMP-induced transcription of HAMP. Interacts with BMP2. Interacts with heterodimers composed of BMP2 and BMP6 in vitro, the interaction inhibits the heterodimer binding to its receptor BMPR1A /ALK3 and thereby suppresses expression of HAMP. Post-translationally, N-glycosylated; required for secretion of the mature protein.

The protein localises to the secreted. Functionally, iron-regulatory hormone that acts as an erythroid regulator after hemorrhage: produced by erythroblasts following blood loss and mediates suppression of hepcidin (HAMP) expression in the liver, thereby promoting increased iron absorption and mobilization from stores. Promotes lipid uptake into adipocytes and hepatocytes via transcriptional up-regulation of genes involved in fatty acid uptake. Inhibits apoptosis and inflammatory response in cardiomyocytes via promotion of sphingosine-1-phosphate (S1P) and cAMP-dependent activation of AKT signaling. Inhibits autophagy induced by nutrient deficiency in hepatocytes via promoting the phosphorylation of IRS1, AKT, and MTOR, and thereby subsequent activation of the AKT-MTOR signaling pathway. Negatively regulates the differentiation of osteoblasts, potentially via sequestering BMP2, and thereby inhibits the activation of SMAD signaling. The reduction in BMP2 signaling in osteoblasts also results in an increase in expression of the osteoclastogenesis-promoting factors TNFSF11/RANKL and SOST, thereby indirectly promotes bone resorption. The protein is Erythroferrone of Homo sapiens (Human).